The primary structure comprises 519 residues: 4-nitrophenol 2-monooxygenase, oxygenase component (519 aa).

The protein belongs to the FADH(2)-utilizing monooxygenase family. In terms of assembly, homotetramer. 4-nitrophenol 2-monooxygenase complex consists of an oxygenase component NphA1 and a flavin reductase component NphA2. Requires FAD as cofactor.

The enzyme catalyses 4-nitrophenol + NADH + O2 + H(+) = 4-nitrocatechol + NAD(+) + H2O. Its activity is regulated as follows. Partially inhibited by concentrations of FAD above 10 uM and completely inhibited by concentrations above 50 uM. Functionally, utilizes the flavins supplied by NphA2 to catalyze the degradation of 4-nitrophenol (4-NP) via 4-nitrocatechol (4-NC) which is used as the sole carbon, nitrogen, and energy source. Can also degrade phenol and 4-chlorophenol as rapidly as 4-NP. This Rhodococcus sp protein is 4-nitrophenol 2-monooxygenase, oxygenase component (nphA1).